Here is a 202-residue protein sequence, read N- to C-terminus: Adenylate kinase (202 aa).

Residue Gly-12–Thr-20 coordinates ATP.

This sequence belongs to the archaeal adenylate kinase family.

The protein resides in the cytoplasm. It catalyses the reaction AMP + ATP = 2 ADP. This chain is Adenylate kinase (adkA), found in Aeropyrum pernix (strain ATCC 700893 / DSM 11879 / JCM 9820 / NBRC 100138 / K1).